Consider the following 174-residue polypeptide: MSLAKSAANKLDWAKVISSLKLTGKTATQLSSFKKRNDEARRQLLELQSQPTSVDFSHYRSVLKNTEVVDKIEQFYKSYKPVSVDVSKQLSTIEAFESQAIENAAETEKLVAQELKDLKETLNNIESARPFDQLTVDELTKARPEIDAKVEEMVKKGRWDVPGYKEKFGDLTIM.

Serine 2 bears the N-acetylserine mark.

It belongs to the ATPase d subunit family.

The protein resides in the mitochondrion inner membrane. Its function is as follows. Mitochondrial membrane ATP synthase (F(1)F(0) ATP synthase or Complex V) produces ATP from ADP in the presence of a proton gradient across the membrane which is generated by electron transport complexes of the respiratory chain. F-type ATPases consist of two structural domains, F(1) - containing the extramembraneous catalytic core, and F(0) - containing the membrane proton channel, linked together by a central stalk and a peripheral stalk. During catalysis, ATP synthesis in the catalytic domain of F(1) is coupled via a rotary mechanism of the central stalk subunits to proton translocation. Part of the complex F(0) domain and the peripheric stalk, which acts as a stator to hold the catalytic alpha(3)beta(3) subcomplex and subunit a/ATP6 static relative to the rotary elements. This is ATP synthase subunit d, mitochondrial (ATP7) from Kluyveromyces lactis (strain ATCC 8585 / CBS 2359 / DSM 70799 / NBRC 1267 / NRRL Y-1140 / WM37) (Yeast).